A 160-amino-acid polypeptide reads, in one-letter code: Large ribosomal subunit protein eL21 (160 aa).

Composition is skewed to basic and acidic residues over residues 112 to 123 and 136 to 145; these read NDQKKKEAKEKG and REAHFVRTNG. The interval 112-145 is disordered; that stretch reads NDQKKKEAKEKGTWVQLKRQPAPPREAHFVRTNG.

It belongs to the eukaryotic ribosomal protein eL21 family. Component of the large ribosomal subunit.

It is found in the cytoplasm. Its subcellular location is the cytosol. The protein resides in the endoplasmic reticulum. Its function is as follows. Component of the large ribosomal subunit. The ribosome is a large ribonucleoprotein complex responsible for the synthesis of proteins in the cell. This is Large ribosomal subunit protein eL21 (RPL21) from Oryctolagus cuniculus (Rabbit).